The primary structure comprises 249 residues: tRNA (guanine-N(1)-)-methyltransferase (249 aa).

S-adenosyl-L-methionine-binding positions include G113 and 133–138 (LGDFVL).

Belongs to the RNA methyltransferase TrmD family. Homodimer.

The protein localises to the cytoplasm. It carries out the reaction guanosine(37) in tRNA + S-adenosyl-L-methionine = N(1)-methylguanosine(37) in tRNA + S-adenosyl-L-homocysteine + H(+). Its function is as follows. Specifically methylates guanosine-37 in various tRNAs. In Leptothrix cholodnii (strain ATCC 51168 / LMG 8142 / SP-6) (Leptothrix discophora (strain SP-6)), this protein is tRNA (guanine-N(1)-)-methyltransferase.